A 156-amino-acid polypeptide reads, in one-letter code: Small ribosomal subunit protein uS7 (156 aa).

It belongs to the universal ribosomal protein uS7 family. As to quaternary structure, part of the 30S ribosomal subunit. Contacts proteins S9 and S11.

In terms of biological role, one of the primary rRNA binding proteins, it binds directly to 16S rRNA where it nucleates assembly of the head domain of the 30S subunit. Is located at the subunit interface close to the decoding center, probably blocks exit of the E-site tRNA. This chain is Small ribosomal subunit protein uS7, found in Exiguobacterium sibiricum (strain DSM 17290 / CCUG 55495 / CIP 109462 / JCM 13490 / 255-15).